The chain runs to 786 residues: Endonuclease MutS2 (786 aa).

332–339 (GPNTGGKT) serves as a coordination point for ATP. One can recognise a Smr domain in the interval 711–786 (IDLRGMDSEE…GTGVTVVILK (76 aa)).

Belongs to the DNA mismatch repair MutS family. MutS2 subfamily. Homodimer. Binds to stalled ribosomes, contacting rRNA.

Its function is as follows. Endonuclease that is involved in the suppression of homologous recombination and thus may have a key role in the control of bacterial genetic diversity. In terms of biological role, acts as a ribosome collision sensor, splitting the ribosome into its 2 subunits. Detects stalled/collided 70S ribosomes which it binds and splits by an ATP-hydrolysis driven conformational change. Acts upstream of the ribosome quality control system (RQC), a ribosome-associated complex that mediates the extraction of incompletely synthesized nascent chains from stalled ribosomes and their subsequent degradation. Probably generates substrates for RQC. In Clostridium perfringens (strain ATCC 13124 / DSM 756 / JCM 1290 / NCIMB 6125 / NCTC 8237 / Type A), this protein is Endonuclease MutS2.